Reading from the N-terminus, the 294-residue chain is PAK4-inhibitor INKA2 (294 aa).

3 disordered regions span residues 50-143 (ISGG…STLM), 170-198 (PELEKGGEKGETGEAGEPKGGRGQPRELG), and 223-290 (LKEK…DINT). Over residues 85–99 (SPSNQASLGSTSSGK) the composition is skewed to polar residues. An inka box region spans residues 134-177 (EPDDWTSTLMSRGRNRQPLVLGDNVFADLVGNWLDLPELEKGGE). Residues 171-198 (ELEKGGEKGETGEAGEPKGGRGQPRELG) are compositionally biased toward basic and acidic residues. A compositionally biased stretch (basic residues) spans 241–253 (RSQKVKKRSHSKG).

This sequence belongs to the INKA family. As to quaternary structure, interacts with PAK4.

The protein resides in the nucleus. Inhibitor of the serine/threonine-protein kinase PAK4. Acts by binding PAK4 in a substrate-like manner, inhibiting the protein kinase activity. The sequence is that of PAK4-inhibitor INKA2 from Bos taurus (Bovine).